A 156-amino-acid polypeptide reads, in one-letter code: Cyclic pyranopterin monophosphate synthase (156 aa).

Substrate-binding positions include 73–75 (LCH) and 110–111 (ME). Aspartate 125 is an active-site residue.

Belongs to the MoaC family. As to quaternary structure, homohexamer; trimer of dimers.

It catalyses the reaction (8S)-3',8-cyclo-7,8-dihydroguanosine 5'-triphosphate = cyclic pyranopterin phosphate + diphosphate. It participates in cofactor biosynthesis; molybdopterin biosynthesis. Catalyzes the conversion of (8S)-3',8-cyclo-7,8-dihydroguanosine 5'-triphosphate to cyclic pyranopterin monophosphate (cPMP). This Stutzerimonas stutzeri (strain A1501) (Pseudomonas stutzeri) protein is Cyclic pyranopterin monophosphate synthase.